Reading from the N-terminus, the 108-residue chain is uncharacterized protein (108 aa).

This is an uncharacterized protein from Schizosaccharomyces pombe (strain 972 / ATCC 24843) (Fission yeast).